Consider the following 89-residue polypeptide: Small ribosomal subunit protein uS15 (89 aa).

The protein belongs to the universal ribosomal protein uS15 family. As to quaternary structure, part of the 30S ribosomal subunit. Forms a bridge to the 50S subunit in the 70S ribosome, contacting the 23S rRNA.

In terms of biological role, one of the primary rRNA binding proteins, it binds directly to 16S rRNA where it helps nucleate assembly of the platform of the 30S subunit by binding and bridging several RNA helices of the 16S rRNA. Forms an intersubunit bridge (bridge B4) with the 23S rRNA of the 50S subunit in the ribosome. The protein is Small ribosomal subunit protein uS15 of Nocardia farcinica (strain IFM 10152).